The sequence spans 421 residues: UPF0229 protein lpp2857 (421 aa).

The disordered stretch occupies residues 83 to 110 (IAGDRIKRPSGGGAGGAGGNASDSGEGE). Residues 92-101 (SGGGAGGAGG) show a composition bias toward gly residues.

Belongs to the UPF0229 family.

The sequence is that of UPF0229 protein lpp2857 from Legionella pneumophila (strain Paris).